The chain runs to 468 residues: Phosphatidylinositol-binding clathrin assembly protein LAP (468 aa).

The region spanning 16–158 is the ENTH domain; that stretch reads RHSLAGQGLA…LSYRAMAFDF (143 aa). The disordered stretch occupies residues 438 to 468; the sequence is NAGDGTAKYDGGAGSSPFDWGATDDDGGAAQ. The segment covering 459 to 468 has biased composition (acidic residues); it reads ATDDDGGAAQ.

This sequence belongs to the PICALM/SNAP91 family. As to quaternary structure, binds clathrin and phosphatidylinositol 4,5-bisphosphate. In terms of tissue distribution, in embryos, expression is seen in central and peripheral nervous systems (brain and ventral nerve cord) and Garland cells. Coexpressed with clathrin at presynaptic boutons of neuromuscular junctions.

The protein resides in the membrane. Its subcellular location is the clathrin-coated pit. The protein localises to the golgi apparatus. It localises to the cytoplasmic vesicle. It is found in the clathrin-coated vesicle. In terms of biological role, assembly protein recruiting clathrin and adaptor protein complex 2 (AP2) to cell membranes at sites of coated-pit formation and clathrin-vesicle assembly. May be required to determine the amount of membrane to be recycled, possibly by regulating the size of the clathrin cage. Involved in AP2-dependent clathrin-mediated endocytosis at the neuromuscular junction. The chain is Phosphatidylinositol-binding clathrin assembly protein LAP (lap) from Drosophila melanogaster (Fruit fly).